Reading from the N-terminus, the 841-residue chain is MKIERYFKAIARAFIITFLFSLILQDNGVLARKAKKQDKGAALKSIYDYHVRPYGTVVQSQIAKASPIVDAAKQATVNVKSYYDEHAKPKVENIRYEVNEVIDKKVAPCIKAFNEKARKIGSKVLDGDNLRELYTTGKERIHFFIVDVLIPFFQRVVQEVRTISRDIAEKLQYFWEIHAIPAYHHYKPIIQRGAMDGYMQLRYVFFPAAKATITQMIETSIRFLRTFLDMHIKPQLQHIYESVVEEKSEAFASATSSKILSEMSASMASSSAHYTSSPTILSRTKSVETPVPMEAAEEEPATEYSIPSSVTFNSQNDCFSNAMNYLEHEYETLVSTFTLSVSEHWEDLLRKATDSCQKELEAFEEISNLRVLAVENSLGNLIQKAEESNYDQAIMDLFEYVKDSILRVHERAIKLRTLSDSIRADVAENIEMGINSIREQAAASSEVALAACSGIKHNAEQVNKLNALIQKVYSYITAESEKVGNRYGETLDNVIKQHLSRIGSVASSAVQRLTAVKNSHKLKMVDRSSAELPNFDYLVSDQVHKIVEINDEHADCDDVNFSTASFEIYERSIPTHGADSERKILKRDSLLNEDDEIFNDLNSDKTIKTNQATSTSSSNTQEISYTGTLNDNINEGLSTFPSIDIPASEADNVYSILPIDVSTSEAEGAYSILPIDVPKSVAEETYSFLPSDVPKSEAEKVYSILPIDVPQSVAEETYSFKPSDIPESEAEKIYSILPIDVKDPSLEKDGHVIDSSNLQTDSVKDYSEVSRADNLDASSDTIFSVLHAENEASITKEVHSTPLSDVASSEAEKVYTILPIEVPTDPLPNYSSDVESELTSD.

A signal peptide spans 1-31; that stretch reads MKIERYFKAIARAFIITFLFSLILQDNGVLA.

The protein resides in the secreted. This is an uncharacterized protein from Schizosaccharomyces pombe (strain 972 / ATCC 24843) (Fission yeast).